The primary structure comprises 412 residues: Argininosuccinate synthase (412 aa).

Residues 24–32 (AFSGGLDTS) and Ala-50 contribute to the ATP site. Residues Tyr-103 and Ser-108 each coordinate L-citrulline. Gly-132 is a binding site for ATP. L-aspartate-binding residues include Thr-134, Asn-138, and Asp-139. Asn-138 serves as a coordination point for L-citrulline. Residue Arg-142 coordinates L-citrulline.

It belongs to the argininosuccinate synthase family. Type 1 subfamily. In terms of assembly, homotetramer.

It is found in the cytoplasm. It catalyses the reaction L-citrulline + L-aspartate + ATP = 2-(N(omega)-L-arginino)succinate + AMP + diphosphate + H(+). Its pathway is amino-acid biosynthesis; L-arginine biosynthesis; L-arginine from L-ornithine and carbamoyl phosphate: step 2/3. The polypeptide is Argininosuccinate synthase (Xanthomonas axonopodis pv. citri (strain 306)).